A 399-amino-acid polypeptide reads, in one-letter code: F-box protein At1g30790 (399 aa).

In terms of domain architecture, F-box spans 3–49 (RQEIDHIPFDLTVEILTRLPAKSLMKFKCVSKLWSSIIHNQSFIDSF).

The protein is F-box protein At1g30790 of Arabidopsis thaliana (Mouse-ear cress).